Consider the following 279-residue polypeptide: Bifunctional protein FolD (279 aa).

NADP(+) contacts are provided by residues G158–S160, S183, and I224.

It belongs to the tetrahydrofolate dehydrogenase/cyclohydrolase family. Homodimer.

It carries out the reaction (6R)-5,10-methylene-5,6,7,8-tetrahydrofolate + NADP(+) = (6R)-5,10-methenyltetrahydrofolate + NADPH. The enzyme catalyses (6R)-5,10-methenyltetrahydrofolate + H2O = (6R)-10-formyltetrahydrofolate + H(+). Its pathway is one-carbon metabolism; tetrahydrofolate interconversion. Functionally, catalyzes the oxidation of 5,10-methylenetetrahydrofolate to 5,10-methenyltetrahydrofolate and then the hydrolysis of 5,10-methenyltetrahydrofolate to 10-formyltetrahydrofolate. This is Bifunctional protein FolD from Caldicellulosiruptor saccharolyticus (strain ATCC 43494 / DSM 8903 / Tp8T 6331).